Consider the following 692-residue polypeptide: Elongation factor G (692 aa).

Residues 8 to 282 (AKTRNIGIMA…AVIDYLPSPL (275 aa)) enclose the tr-type G domain. GTP-binding positions include 17-24 (AHVDAGKT), 81-85 (DTPGH), and 135-138 (NKMD).

It belongs to the TRAFAC class translation factor GTPase superfamily. Classic translation factor GTPase family. EF-G/EF-2 subfamily.

The protein localises to the cytoplasm. Catalyzes the GTP-dependent ribosomal translocation step during translation elongation. During this step, the ribosome changes from the pre-translocational (PRE) to the post-translocational (POST) state as the newly formed A-site-bound peptidyl-tRNA and P-site-bound deacylated tRNA move to the P and E sites, respectively. Catalyzes the coordinated movement of the two tRNA molecules, the mRNA and conformational changes in the ribosome. The polypeptide is Elongation factor G (Streptococcus uberis (strain ATCC BAA-854 / 0140J)).